A 933-amino-acid chain; its full sequence is Serine/threonine-protein kinase PknD (933 aa).

Residues 4 to 291 form the Protein kinase domain; sequence YDIIRMIGKG…ALKADIEQHL (288 aa). Residues 10 to 18 and lysine 33 each bind ATP; that span reads IGKGGMGEV. Catalysis depends on aspartate 138, which acts as the Proton acceptor.

The protein belongs to the protein kinase superfamily. Ser/Thr protein kinase family. Post-translationally, autophosphorylated on serine and threonine residues.

The catalysed reaction is L-seryl-[protein] + ATP = O-phospho-L-seryl-[protein] + ADP + H(+). The enzyme catalyses L-threonyl-[protein] + ATP = O-phospho-L-threonyl-[protein] + ADP + H(+). Functionally, together with the serine/threonine kinase Pkn1, may play a role in the specific interactions with host proteins during intracellular growth. This Chlamydia abortus (strain DSM 27085 / S26/3) (Chlamydophila abortus) protein is Serine/threonine-protein kinase PknD.